The following is an 829-amino-acid chain: Leucine--tRNA ligase (829 aa).

Residues 40–50 carry the 'HIGH' region motif; the sequence is PYPSGNIHMGH. Positions 581–585 match the 'KMSKS' region motif; that stretch reads KMSKS. An ATP-binding site is contributed by K584.

The protein belongs to the class-I aminoacyl-tRNA synthetase family.

It is found in the cytoplasm. The catalysed reaction is tRNA(Leu) + L-leucine + ATP = L-leucyl-tRNA(Leu) + AMP + diphosphate. The chain is Leucine--tRNA ligase from Nitratidesulfovibrio vulgaris (strain DP4) (Desulfovibrio vulgaris).